A 424-amino-acid polypeptide reads, in one-letter code: Na(+)/H(+) antiporter NhaP (424 aa).

Transmembrane regions (helical) follow at residues 3-23 (DLVAAFIALTTLLTYVNYRFI), 25-45 (LPPTIGVMATALVFSLIVQGL), 66-86 (FSEVLMTWFLPALLFAGALHV), 96-116 (WPIGLLATAGVLIATFVIGGL), 130-152 (FIYCLLFGALISPTDPIAVLGIL), 170-190 (LFNDGTAVVVFAIILGILQLG), 200-220 (ILFVQEAIGGVVFGAVLGYGV), 246-266 (ALAARLHVSAPIAMVVAGLII), 296-316 (ALLFALIGLELLLLPFSWLHV), 320-340 (FALGGAVLVSRLLTVGPAILV), 358-378 (ILVWGGLRGGVSVALALSLPL), and 384-404 (LILSLTYIVVLVSILLQGLSI).

Belongs to the monovalent cation:proton antiporter 1 (CPA1) transporter (TC 2.A.36) family.

Its subcellular location is the cell inner membrane. Its activity is regulated as follows. Inhibited by amiloride. In terms of biological role, na(+)/H(+) antiporter that extrudes sodium in exchange for external protons. Also has weak Li(+)/H(+) antiport activity. The polypeptide is Na(+)/H(+) antiporter NhaP (nhaP) (Pseudomonas aeruginosa (strain ATCC 15692 / DSM 22644 / CIP 104116 / JCM 14847 / LMG 12228 / 1C / PRS 101 / PAO1)).